The chain runs to 172 residues: Ferritin-2 heavy chain (172 aa).

Residues 8 to 157 form the Ferritin-like diiron domain; that stretch reads QSFATECENA…DYLTETQRVG (150 aa). Fe cation is bound by residues Glu25, Glu60, His63, Glu105, and Gln139.

Belongs to the ferritin family. In terms of assembly, oligomer of 24 subunits. The functional molecule forms a roughly spherical shell with a diameter of 12 nm and contains a central cavity into which the insoluble mineral iron core is deposited.

It catalyses the reaction 4 Fe(2+) + O2 + 4 H(+) = 4 Fe(3+) + 2 H2O. In terms of biological role, stores iron in a soluble, non-toxic, readily available form. Important for iron homeostasis. Has ferroxidase activity. Iron is taken up in the ferrous form and deposited as ferric hydroxides after oxidation. This Schistosoma mansoni (Blood fluke) protein is Ferritin-2 heavy chain (SCM-2).